Consider the following 65-residue polypeptide: VESP-VB1 (65 aa).

The N-terminal stretch at 1-23 is a signal peptide; that stretch reads MKMSILFLFALIASLACLQLTFA. AXPX repeat units lie at residues 23-26, 27-30, 31-34, 35-38, 39-42, 43-46, and 47-50; these read AAPA, ASPL, ANPG, ASPE, AAPL, ADPL, and ADPF. Residues 24–49 constitute a propeptide that is removed on maturation; sequence APAASPLANPGASPEAAPLADPLADP. At L62 the chain carries Leucine amide.

Expressed by the venom gland.

It localises to the secreted. Its function is as follows. Antimicrobial peptide. Shows activity against both Gram-positive (S.aureus MIC=1.0-3.75 ug/ml) and -negative (E.coli MIC=7.5-15 ug/ml) bacteria, as well against fungi (C.albicans MIC=30 ug/ml). Also promotes important mast cell degranulation. Shows little hemolytic activity on rabbit and human erythrocytes. Its mast cell degranulation activity may be related to the activation of G-protein coupled receptors in mast cells as well as interaction with other proteins located in cell endosomal membranes in the mast cells. This is VESP-VB1 from Vespa bicolor (Black shield wasp).